We begin with the raw amino-acid sequence, 371 residues long: 4-hydroxyphenylpyruvate dioxygenase-like protein (371 aa).

VOC domains lie at 7–135 (RLCH…LLQR) and 160–328 (HVDH…VFTK). Residues histidine 163, histidine 258, and glutamate 339 each coordinate Fe cation.

The protein belongs to the 4HPPD family. Fe cation is required as a cofactor.

The protein localises to the mitochondrion. It catalyses the reaction 3-(4-hydroxyphenyl)pyruvate + O2 = (S)-4-hydroxymandelate + CO2. Iron-dependent dioxygenase that catalyzes the conversion of 4-hydroxyphenylpyruvate (4-HPPA) to 4-hydroxymandelate (4-HMA) in the mitochondria, one of the steps in the biosynthesis of coenzyme Q10 from tyrosine. The polypeptide is 4-hydroxyphenylpyruvate dioxygenase-like protein (Rattus norvegicus (Rat)).